We begin with the raw amino-acid sequence, 491 residues long: 23S rRNA (uracil(1939)-C(5))-methyltransferase RlmD (491 aa).

Basic and acidic residues predominate over residues 1–10 (MSDPTEHPEI). Residues 1-28 (MSDPTEHPEILQDPSSSAPVQGRTDLPP) are disordered. In terms of domain architecture, TRAM spans 18 to 81 (APVQGRTDLP…NNWEQASLTA (64 aa)). The [4Fe-4S] cluster site is built by C94, C104, C107, and C186. Positions 294, 323, 328, 344, 379, and 400 each coordinate S-adenosyl-L-methionine. C447 (nucleophile) is an active-site residue.

It belongs to the class I-like SAM-binding methyltransferase superfamily. RNA M5U methyltransferase family. RlmD subfamily.

It carries out the reaction uridine(1939) in 23S rRNA + S-adenosyl-L-methionine = 5-methyluridine(1939) in 23S rRNA + S-adenosyl-L-homocysteine + H(+). Catalyzes the formation of 5-methyl-uridine at position 1939 (m5U1939) in 23S rRNA. This is 23S rRNA (uracil(1939)-C(5))-methyltransferase RlmD from Paracidovorax citrulli (strain AAC00-1) (Acidovorax citrulli).